A 429-amino-acid chain; its full sequence is Ribosomal RNA small subunit methyltransferase B (429 aa).

Residues 254–260 (CAAPGGK), D277, D303, and D322 each bind S-adenosyl-L-methionine. The active-site Nucleophile is C375.

This sequence belongs to the class I-like SAM-binding methyltransferase superfamily. RsmB/NOP family.

It is found in the cytoplasm. The catalysed reaction is cytidine(967) in 16S rRNA + S-adenosyl-L-methionine = 5-methylcytidine(967) in 16S rRNA + S-adenosyl-L-homocysteine + H(+). Functionally, specifically methylates the cytosine at position 967 (m5C967) of 16S rRNA. This Yersinia pestis bv. Antiqua (strain Angola) protein is Ribosomal RNA small subunit methyltransferase B.